A 261-amino-acid polypeptide reads, in one-letter code: Pantothenate synthetase (261 aa).

29 to 36 is an ATP binding site; that stretch reads MGALHNGH. Residue histidine 36 is the Proton donor of the active site. Position 60 (glutamine 60) interacts with (R)-pantoate. Residue glutamine 60 participates in beta-alanine binding. Residue 147–150 coordinates ATP; the sequence is GEKD. (R)-pantoate is bound at residue glutamine 153. 184–187 provides a ligand contact to ATP; that stretch reads LSSR.

This sequence belongs to the pantothenate synthetase family. In terms of assembly, homodimer.

The protein resides in the cytoplasm. It catalyses the reaction (R)-pantoate + beta-alanine + ATP = (R)-pantothenate + AMP + diphosphate + H(+). It functions in the pathway cofactor biosynthesis; (R)-pantothenate biosynthesis; (R)-pantothenate from (R)-pantoate and beta-alanine: step 1/1. Catalyzes the condensation of pantoate with beta-alanine in an ATP-dependent reaction via a pantoyl-adenylate intermediate. In Francisella tularensis subsp. mediasiatica (strain FSC147), this protein is Pantothenate synthetase.